Here is a 179-residue protein sequence, read N- to C-terminus: Large ribosomal subunit protein uL6 (179 aa).

The protein belongs to the universal ribosomal protein uL6 family. As to quaternary structure, part of the 50S ribosomal subunit.

Functionally, this protein binds to the 23S rRNA, and is important in its secondary structure. It is located near the subunit interface in the base of the L7/L12 stalk, and near the tRNA binding site of the peptidyltransferase center. This is Large ribosomal subunit protein uL6 from Trichodesmium erythraeum (strain IMS101).